A 260-amino-acid chain; its full sequence is Exosome complex component Rrp4 (260 aa).

Residues 59–128 (NDVVIGVVIV…SSMKIELALR (70 aa)) enclose the S1 motif domain. The 59-residue stretch at 136-194 (RTGQIVEVEPVKVPRVIGHGGSMISMLKKETNCSIFVGQNGRIWIDGKDEDIELLSKAL) folds into the KH domain.

This sequence belongs to the RRP4 family. In terms of assembly, component of the archaeal exosome complex. Forms a trimer of Rrp4 and/or Csl4 subunits. The trimer associates with a hexameric ring-like arrangement composed of 3 Rrp41-Rrp42 heterodimers.

It is found in the cytoplasm. Its function is as follows. Non-catalytic component of the exosome, which is a complex involved in RNA degradation. Increases the RNA binding and the efficiency of RNA degradation. Confers strong poly(A) specificity to the exosome. This Methanosarcina mazei (strain ATCC BAA-159 / DSM 3647 / Goe1 / Go1 / JCM 11833 / OCM 88) (Methanosarcina frisia) protein is Exosome complex component Rrp4.